Here is a 238-residue protein sequence, read N- to C-terminus: 3-dehydroquinate dehydratase (238 aa).

Residues 35-37 and arginine 68 each bind 3-dehydroquinate; that span reads ELR. Histidine 131 functions as the Proton donor/acceptor in the catalytic mechanism. The active-site Schiff-base intermediate with substrate is lysine 158. Residues arginine 200 and glutamine 223 each coordinate 3-dehydroquinate.

This sequence belongs to the type-I 3-dehydroquinase family. Homodimer.

The catalysed reaction is 3-dehydroquinate = 3-dehydroshikimate + H2O. It participates in metabolic intermediate biosynthesis; chorismate biosynthesis; chorismate from D-erythrose 4-phosphate and phosphoenolpyruvate: step 3/7. Involved in the third step of the chorismate pathway, which leads to the biosynthesis of aromatic amino acids. Catalyzes the cis-dehydration of 3-dehydroquinate (DHQ) and introduces the first double bond of the aromatic ring to yield 3-dehydroshikimate. The sequence is that of 3-dehydroquinate dehydratase from Staphylococcus epidermidis (strain ATCC 35984 / DSM 28319 / BCRC 17069 / CCUG 31568 / BM 3577 / RP62A).